The sequence spans 551 residues: Scaffold protein D13 ortholog (551 aa).

This sequence belongs to the poxviridae protein D13 family. In terms of assembly, homotrimer. Self-assembles to form a layer. Interacts with A17 (via N-terminus); this interaction is necessary for D13 association with membranes.

The protein resides in the membrane. In terms of biological role, scaffold protein which forms a transitory spherical honeycomb lattice providing curvature and rigidity to the convex membrane of crescent and immature virions (IV). This association occurs concomitantly with viral membrane formation. Targeted by the drug rifampicin, which prevents the formation of this lattice, and hence virus morphogenesis. In the presence of rifampicin, irregularly shaped membranes that lack the honeycomb layer accumulate around areas of electron-dense viroplasm. This layer is lost from virions during maturation from IV to mature virion (MV), through the proteolysis of A17 N-terminus. The sequence is that of Scaffold protein D13 ortholog from Sus scrofa (Pig).